A 182-amino-acid polypeptide reads, in one-letter code: R-phycoerythrin subunit beta (182 aa).

Cys82 provides a ligand contact to (2R,3E)-phycoerythrobilin.

The protein belongs to the phycobiliprotein family. Homodimer. Contains one covalently linked phycoerythrobilin chromophore.

Functionally, green-light absorbing phycoerythrin of unknown function. This is R-phycoerythrin subunit beta (cpeB) from Prochlorococcus marinus (strain SARG / CCMP1375 / SS120).